We begin with the raw amino-acid sequence, 1029 residues long: Kinesin-like protein KIF17 (1029 aa).

A Kinesin motor domain is found at 5-335 (AVKVVVRCRP…LRYANRAKNI (331 aa)). 91–98 (GQTGSGKS) provides a ligand contact to ATP. Residues 346–462 (KDALLREYQE…EENLRKETEA (117 aa)) are a coiled coil. Disordered regions lie at residues 523-569 (ELPK…MPTE) and 647-673 (VPAPTDLLEPSDARPEAEAADDFPPRP). Residues 532-551 (SEISLGSSESSSLEETSVSE) show a composition bias toward low complexity. Positions 657–673 (SDARPEAEAADDFPPRP) are enriched in basic and acidic residues. Positions 739–846 (QQVLARLQLL…QLEKIDYLAT (108 aa)) form a coiled coil. Disordered stretches follow at residues 908 to 931 (AVSTGPQNKPARKTSAADNGEPNM) and 968 to 1029 (KSLT…SEPL).

Belongs to the TRAFAC class myosin-kinesin ATPase superfamily. Kinesin family. Homodimer. Interacts with APBA1 (via PDZ domain); the interaction is direct and is required for association of KIF17 with the cargo that is to be transported. Interacts with IFT B complex components IFT52 and IFT57. Interacts with IFT70B. Interacts with PIWIL1. Interacts with TBATA.

It is found in the cytoplasm. It localises to the cytoskeleton. The protein resides in the cell projection. Its subcellular location is the cilium. The protein localises to the dendrite. Dendrite-specific motor protein which, in association with the Apba1-containing complex (LIN-10-LIN-2-LIN-7 complex), transports vesicles containing N-methyl-D-aspartate (NMDA) receptor subunit NR2B along microtubules. The protein is Kinesin-like protein KIF17 (KIF17) of Homo sapiens (Human).